The primary structure comprises 521 residues: CDP-diacylglycerol--glycerol-3-phosphate 3-phosphatidyltransferase (521 aa).

An ATP-binding site is contributed by 91 to 98; it reads ASLYLGKS. PLD phosphodiesterase domains lie at 177-203 and 419-457; these read GLGL…SNDY and NGWS…TRRA. Active-site residues include His182, Lys184, and Asp189.

This sequence belongs to the CDP-alcohol phosphatidyltransferase class-II family.

Its subcellular location is the mitochondrion. It catalyses the reaction a CDP-1,2-diacyl-sn-glycerol + sn-glycerol 3-phosphate = a 1,2-diacyl-sn-glycero-3-phospho-(1'-sn-glycero-3'-phosphate) + CMP + H(+). It functions in the pathway phospholipid metabolism; phosphatidylglycerol biosynthesis; phosphatidylglycerol from CDP-diacylglycerol: step 1/2. Its function is as follows. Essential for the viability of mitochondrial petite mutant. Catalyzes the committed step to the synthesis of the acidic phospholipids. This chain is CDP-diacylglycerol--glycerol-3-phosphate 3-phosphatidyltransferase (PGS1), found in Saccharomyces pastorianus (Lager yeast).